A 492-amino-acid polypeptide reads, in one-letter code: N-succinylglutamate 5-semialdehyde dehydrogenase (492 aa).

220–225 (GSANTG) contributes to the NAD(+) binding site. Residues glutamate 243 and cysteine 277 contribute to the active site.

This sequence belongs to the aldehyde dehydrogenase family. AstD subfamily.

It carries out the reaction N-succinyl-L-glutamate 5-semialdehyde + NAD(+) + H2O = N-succinyl-L-glutamate + NADH + 2 H(+). It participates in amino-acid degradation; L-arginine degradation via AST pathway; L-glutamate and succinate from L-arginine: step 4/5. Its function is as follows. Catalyzes the NAD-dependent reduction of succinylglutamate semialdehyde into succinylglutamate. This chain is N-succinylglutamate 5-semialdehyde dehydrogenase, found in Escherichia coli O139:H28 (strain E24377A / ETEC).